Reading from the N-terminus, the 228-residue chain is Ribonuclease 3 (228 aa).

The region spanning 5–127 (LMALQARLQH…VIGAVYLDAG (123 aa)) is the RNase III domain. A Mg(2+)-binding site is contributed by glutamate 40. Aspartate 44 is an active-site residue. Aspartate 113 and glutamate 116 together coordinate Mg(2+). Residue glutamate 116 is part of the active site. The region spanning 154 to 224 (DPKTELQEWL…AAAMLQTLKA (71 aa)) is the DRBM domain.

It belongs to the ribonuclease III family. As to quaternary structure, homodimer. The cofactor is Mg(2+).

It is found in the cytoplasm. The enzyme catalyses Endonucleolytic cleavage to 5'-phosphomonoester.. Functionally, digests double-stranded RNA. Involved in the processing of primary rRNA transcript to yield the immediate precursors to the large and small rRNAs (23S and 16S). Processes some mRNAs, and tRNAs when they are encoded in the rRNA operon. Processes pre-crRNA and tracrRNA of type II CRISPR loci if present in the organism. This Albidiferax ferrireducens (strain ATCC BAA-621 / DSM 15236 / T118) (Rhodoferax ferrireducens) protein is Ribonuclease 3.